Reading from the N-terminus, the 416-residue chain is Solute carrier family 35 member D3 (416 aa).

The next 10 helical transmembrane spans lie at 9-29 (VLGISVAIAHGVFSGSLNILL), 38-58 (FSFLTLVQCLTSSTAALSLEL), 64-84 (LIAVPPFGLSLARSFAGVAVL), 103-123 (MYVVFKRCLPLVTMLIGVLVL), 131-151 (GVLAAVLITTCGAALAGAGDL), 155-175 (PIGYVTGVLAVLVHAAYLVLI), 187-207 (LTAQYVIAVSATPLLVICSFA), 224-244 (AMVCIFVACILIGCAMNFTTL), 257-277 (FVGVVKSIATITVGMVAFSDV), and 280-300 (TSLFIAGVVVNTLGSIIYCVA). Positions 334–384 (MEELPGEGGNGRSEGGEAAGGPAQESRQEVRGSPRGVPLVAGSSEEGSRRS) are disordered. A compositionally biased stretch (gly residues) spans 339 to 352 (GEGGNGRSEGGEAA).

Belongs to the TPT transporter family. SLC35D subfamily. In terms of assembly, could interact with ATG14, BECN1 and PIK3C3 that form the PI3KC3-C1/AIC/autophagy initiation complex; enhancing the formation of the AIC and promoting autophagy.

Its subcellular location is the cytoplasmic vesicle. The protein localises to the secretory vesicle. The protein resides in the synaptic vesicle membrane. It localises to the early endosome membrane. It is found in the endoplasmic reticulum membrane. The catalysed reaction is UDP-alpha-D-glucose(in) = UDP-alpha-D-glucose(out). Its activity is regulated as follows. Inhibited by proton uncouplers that directly abolish the proton electrochemical gradient. Probable UDP-glucose transmembrane transporter involved in UDP-glucose transport from the cytosol to the lumen of synaptic vesicles. It is involved in platelet dense granules maturation. In terms of biological role, alternatively, could function as a molecular adapter enhancing the formation of the PI3KC3-C1/AIC/autophagy initiation complex to promote autophagy in dopaminergic neurons. Could also regulate the plasma membrane localization of the D(1A) dopamine receptor/DRD1 and dopamine signaling. This chain is Solute carrier family 35 member D3, found in Homo sapiens (Human).